The chain runs to 416 residues: Enolase (416 aa).

Gln162 is a (2R)-2-phosphoglycerate binding site. Glu204 serves as the catalytic Proton donor. Mg(2+) is bound by residues Asp241, Glu282, and Asp309. The (2R)-2-phosphoglycerate site is built by Lys334, Arg363, Ser364, and Lys385. The active-site Proton acceptor is the Lys334.

It belongs to the enolase family. Requires Mg(2+) as cofactor.

Its subcellular location is the cytoplasm. The protein localises to the secreted. It localises to the cell surface. It carries out the reaction (2R)-2-phosphoglycerate = phosphoenolpyruvate + H2O. The protein operates within carbohydrate degradation; glycolysis; pyruvate from D-glyceraldehyde 3-phosphate: step 4/5. Its function is as follows. Catalyzes the reversible conversion of 2-phosphoglycerate (2-PG) into phosphoenolpyruvate (PEP). It is essential for the degradation of carbohydrates via glycolysis. This is Enolase from Campylobacter concisus (strain 13826).